The following is a 103-amino-acid chain: Histone H4, major (103 aa).

Residues 1-12 (MAGGKGGKGMGK) show a composition bias toward gly residues. Residues 1 to 29 (MAGGKGGKGMGKVGAKRHSKRSNKASIEG) form a disordered region. Lysine 5, lysine 8, lysine 12, and lysine 16 each carry N6-acetyllysine. Basic residues predominate over residues 14 to 23 (GAKRHSKRSN). The DNA-binding element occupies 16–21 (KRHSKR).

The protein belongs to the histone H4 family. As to quaternary structure, the nucleosome is a histone octamer containing two molecules each of H2A, H2B, H3 and H4 assembled in one H3-H4 heterotetramer and two H2A-H2B heterodimers. The octamer wraps approximately 147 bp of DNA.

It is found in the nucleus. The protein localises to the chromosome. In terms of biological role, core component of nucleosome. Nucleosomes wrap and compact DNA into chromatin, limiting DNA accessibility to the cellular machineries which require DNA as a template. Histones thereby play a central role in transcription regulation, DNA repair, DNA replication and chromosomal stability. DNA accessibility is regulated via a complex set of post-translational modifications of histones, also called histone code, and nucleosome remodeling. The chain is Histone H4, major from Tetrahymena pyriformis.